A 270-amino-acid polypeptide reads, in one-letter code: Urease accessory protein UreD (270 aa).

Belongs to the UreD family. In terms of assembly, ureD, UreF and UreG form a complex that acts as a GTP-hydrolysis-dependent molecular chaperone, activating the urease apoprotein by helping to assemble the nickel containing metallocenter of UreC. The UreE protein probably delivers the nickel.

It localises to the cytoplasm. Required for maturation of urease via the functional incorporation of the urease nickel metallocenter. This Klebsiella pneumoniae protein is Urease accessory protein UreD.